Consider the following 314-residue polypeptide: Carbamate kinase (314 aa).

The protein belongs to the carbamate kinase family. In terms of assembly, homodimer.

Its subcellular location is the cytoplasm. The catalysed reaction is hydrogencarbonate + NH4(+) + ATP = carbamoyl phosphate + ADP + H2O + H(+). It participates in metabolic intermediate metabolism; carbamoyl phosphate degradation; CO(2) and NH(3) from carbamoyl phosphate: step 1/1. This Clostridium perfringens (strain 13 / Type A) protein is Carbamate kinase (arcC).